We begin with the raw amino-acid sequence, 474 residues long: tRNA-2-methylthio-N(6)-dimethylallyladenosine synthase (474 aa).

The MTTase N-terminal domain occupies 3–120 (KKLHIKTWGC…LPDMIEQVRR (118 aa)). [4Fe-4S] cluster is bound by residues Cys-12, Cys-49, Cys-83, Cys-157, Cys-161, and Cys-164. The region spanning 143–375 (RAEGPTAFVS…QDRITQQAMR (233 aa)) is the Radical SAM core domain. One can recognise a TRAM domain in the interval 378–441 (RHMMGTVQRI…TNSLRGKFIR (64 aa)).

Belongs to the methylthiotransferase family. MiaB subfamily. As to quaternary structure, monomer. The cofactor is [4Fe-4S] cluster.

It is found in the cytoplasm. It catalyses the reaction N(6)-dimethylallyladenosine(37) in tRNA + (sulfur carrier)-SH + AH2 + 2 S-adenosyl-L-methionine = 2-methylsulfanyl-N(6)-dimethylallyladenosine(37) in tRNA + (sulfur carrier)-H + 5'-deoxyadenosine + L-methionine + A + S-adenosyl-L-homocysteine + 2 H(+). Its function is as follows. Catalyzes the methylthiolation of N6-(dimethylallyl)adenosine (i(6)A), leading to the formation of 2-methylthio-N6-(dimethylallyl)adenosine (ms(2)i(6)A) at position 37 in tRNAs that read codons beginning with uridine. The polypeptide is tRNA-2-methylthio-N(6)-dimethylallyladenosine synthase (Shewanella sp. (strain MR-7)).